The sequence spans 278 residues: Nucleotide-binding protein Tbd_0529 (278 aa).

8-15 (GLSGSGKS) serves as a coordination point for ATP. 57–60 (DARS) contacts GTP.

This sequence belongs to the RapZ-like family.

In terms of biological role, displays ATPase and GTPase activities. The sequence is that of Nucleotide-binding protein Tbd_0529 from Thiobacillus denitrificans (strain ATCC 25259 / T1).